The sequence spans 375 residues: Anhydro-N-acetylmuramic acid kinase 1 (375 aa).

20–27 (GTSFDGVD) is an ATP binding site. The segment at 351–375 (APSTTGVAAPVGGGRRSKPGARELS) is disordered.

It belongs to the anhydro-N-acetylmuramic acid kinase family.

The enzyme catalyses 1,6-anhydro-N-acetyl-beta-muramate + ATP + H2O = N-acetyl-D-muramate 6-phosphate + ADP + H(+). Its pathway is amino-sugar metabolism; 1,6-anhydro-N-acetylmuramate degradation. The protein operates within cell wall biogenesis; peptidoglycan recycling. Its function is as follows. Catalyzes the specific phosphorylation of 1,6-anhydro-N-acetylmuramic acid (anhMurNAc) with the simultaneous cleavage of the 1,6-anhydro ring, generating MurNAc-6-P. Is required for the utilization of anhMurNAc either imported from the medium or derived from its own cell wall murein, and thus plays a role in cell wall recycling. In Jannaschia sp. (strain CCS1), this protein is Anhydro-N-acetylmuramic acid kinase 1.